Reading from the N-terminus, the 184-residue chain is Protein Syd (184 aa).

Belongs to the Syd family.

The protein localises to the cell inner membrane. In terms of biological role, interacts with the SecY protein in vivo. May bind preferentially to an uncomplexed state of SecY, thus functioning either as a chelating agent for excess SecY in the cell or as a regulatory factor that negatively controls the translocase function. This Photorhabdus laumondii subsp. laumondii (strain DSM 15139 / CIP 105565 / TT01) (Photorhabdus luminescens subsp. laumondii) protein is Protein Syd.